Consider the following 222-residue polypeptide: Small ribosomal subunit protein uS3 (222 aa).

Positions 39–108 constitute a KH type-2 domain; that stretch reads IRKFVKNKLS…NVLINIVEVK (70 aa).

It belongs to the universal ribosomal protein uS3 family. Part of the 30S ribosomal subunit. Forms a tight complex with proteins S10 and S14.

Binds the lower part of the 30S subunit head. Binds mRNA in the 70S ribosome, positioning it for translation. The chain is Small ribosomal subunit protein uS3 from Clostridium acetobutylicum (strain ATCC 824 / DSM 792 / JCM 1419 / IAM 19013 / LMG 5710 / NBRC 13948 / NRRL B-527 / VKM B-1787 / 2291 / W).